An 859-amino-acid polypeptide reads, in one-letter code: Protein O-mannosyl-transferase Tmtc1 (859 aa).

At 1 to 22 (MHTPKCRRPSMSATLSHKDLAG) the chain is on the cytoplasmic side. A helical membrane pass occupies residues 23–43 (LAGCSALAFVLYLNTLNAGFV). The Extracellular segment spans residues 44 to 103 (YDDRRAILANGDVTGARPLANLLRNDFWGTPLVDSGSHGSWRPLCVLSFRLNYLAGGMTP). The chain crosses the membrane as a helical span at residues 104-124 (LGYHLVNVMLHCVATWLVFLV). The Cytoplasmic portion of the chain corresponds to 125–134 (ARTLLPSRMG). Helical transmembrane passes span 135-154 (VLAA…AVAG) and 155-174 (LVGR…YLSY). At 175 to 189 (RRHMLNREWGSLILT) the chain is on the cytoplasmic side. A helical transmembrane segment spans residues 190–210 (IMLALAALLCKETAITALLLC). Topologically, residues 211–245 (GLCDVLSPVGRENSDKVCDGSISGLASFNFQRRFR) are extracellular. A helical transmembrane segment spans residues 246–266 (SLSILGFTLLCGLYCRLSLLP). The Cytoplasmic segment spans residues 267 to 288 (RPSTAFSAADNPTAHESCFWTR). Residues 289 to 309 (TLTFLYLPVANFGILLWPQEL) form a helical membrane-spanning segment. At 310–328 (SFDWGMEAVSRIRTLWDAR) the chain is on the extracellular side. The chain crosses the membrane as a helical span at residues 329–349 (NILTAGFYGSLVAILWKGSGL). The Cytoplasmic segment spans residues 350–422 (RSAASPMDFA…SWTAAPILGT (73 aa)). A helical membrane pass occupies residues 423 to 443 (AFLVLPFLPASNLLFYVGFVM). Residues 444-446 (AER) are Extracellular-facing. Residues 447-467 (VLYLPSVGYCLLFGLGFGHLW) form a helical membrane-spanning segment. The Cytoplasmic segment spans residues 468–473 (QRVNSS). Residues 474-493 (WRSRLMLLCGLALLLGVHGV) form a helical membrane-spanning segment. Residues 494–859 (RTFRRNLDWR…RMNVHKHENE (366 aa)) lie on the Extracellular side of the membrane. TPR repeat units follow at residues 518–551 (PKAL…RPTM), 552–585 (ADAH…RPQL), 586–620 (AVAY…EGSG), 632–665 (YTCY…LPLL), 671–704 (AVLH…QPEQ), 705–739 (GAAY…APLE), 740–773 (PSSH…APQD), 774–807 (YTLQ…QPMA), and 808–841 (AHAH…QPGH). Asn-567 carries N-linked (GlcNAc...) asparagine glycosylation. N-linked (GlcNAc...) asparagine glycosylation is present at Asn-718.

This sequence belongs to the TMTC family.

It is found in the membrane. It localises to the endoplasmic reticulum. The enzyme catalyses a di-trans,poly-cis-dolichyl beta-D-mannosyl phosphate + L-seryl-[protein] = 3-O-(alpha-D-mannosyl)-L-seryl-[protein] + a di-trans,poly-cis-dolichyl phosphate + H(+). The catalysed reaction is a di-trans,poly-cis-dolichyl beta-D-mannosyl phosphate + L-threonyl-[protein] = 3-O-(alpha-D-mannosyl)-L-threonyl-[protein] + a di-trans,poly-cis-dolichyl phosphate + H(+). Its pathway is protein modification; protein glycosylation. Its function is as follows. Transfers mannosyl residues to the hydroxyl group of serine or threonine residues. In Drosophila melanogaster (Fruit fly), this protein is Protein O-mannosyl-transferase Tmtc1.